We begin with the raw amino-acid sequence, 336 residues long: Opsin-1, short-wave-sensitive 1 (336 aa).

The Extracellular segment spans residues 1 to 29; the sequence is MDAWAVQFGNASKVSPFEGEQYHIAPKWA. Residue asparagine 10 is glycosylated (N-linked (GlcNAc...) asparagine). The helical transmembrane segment at 30–54 threads the bilayer; that stretch reads FYLQAAFMGFVFIVGTPMNGIVLFV. Over 55 to 66 the chain is Cytoplasmic; sequence TMKYKKLRQPLN. Residues 67–91 traverse the membrane as a helical segment; sequence YILVNISLAGFIFDTFSVSQVFVCA. At 92–106 the chain is on the extracellular side; that stretch reads ARGYYFLGYTLCAME. Cysteine 103 and cysteine 180 are disulfide-bonded. Residues 107-126 form a helical membrane-spanning segment; the sequence is AAMGSIAGLVTGWSLAVLAF. At 127-145 the chain is on the cytoplasmic side; the sequence is ERYVVICKPFGSFKFGQGQ. Residues 146–169 form a helical membrane-spanning segment; the sequence is AVGAVVFTWIIGTACATPPFFGWS. Residues 170–195 are Extracellular-facing; sequence RYIPEGLGTACGPDWYTKSEEYNSES. A helical transmembrane segment spans residues 196–223; that stretch reads YTYFLLITCFMMPMTIIIFSYSQLLGAL. At 224 to 245 the chain is on the cytoplasmic side; it reads RAVAAQQAESESTQKAEREVSR. A helical transmembrane segment spans residues 246–269; it reads MVVVMVGSFVLCYAPYAVTAMYFA. The Extracellular segment spans residues 270–277; that stretch reads NSDEPNKD. A helical membrane pass occupies residues 278–302; the sequence is YRLVAIPAFFSKSSCVYNPLIYAFM. Lysine 289 carries the post-translational modification N6-(retinylidene)lysine. The Cytoplasmic portion of the chain corresponds to 303 to 336; the sequence is NKQFNACIMETVFGKKIDESSEVSSKTETSSVSA.

This sequence belongs to the G-protein coupled receptor 1 family. Opsin subfamily. In terms of processing, phosphorylated on some or all of the serine and threonine residues present in the C-terminal region. In terms of tissue distribution, retinal short single cones, outer and inner segments.

It is found in the membrane. In terms of biological role, visual pigments are the light-absorbing molecules that mediate vision. They consist of an apoprotein, opsin, covalently linked to cis-retinal. This Danio rerio (Zebrafish) protein is Opsin-1, short-wave-sensitive 1 (opn1sw1).